The sequence spans 105 residues: Pyrimidine/purine nucleoside phosphorylase (105 aa).

This sequence belongs to the nucleoside phosphorylase PpnP family.

The enzyme catalyses a purine D-ribonucleoside + phosphate = a purine nucleobase + alpha-D-ribose 1-phosphate. It carries out the reaction adenosine + phosphate = alpha-D-ribose 1-phosphate + adenine. The catalysed reaction is cytidine + phosphate = cytosine + alpha-D-ribose 1-phosphate. It catalyses the reaction guanosine + phosphate = alpha-D-ribose 1-phosphate + guanine. The enzyme catalyses inosine + phosphate = alpha-D-ribose 1-phosphate + hypoxanthine. It carries out the reaction thymidine + phosphate = 2-deoxy-alpha-D-ribose 1-phosphate + thymine. The catalysed reaction is uridine + phosphate = alpha-D-ribose 1-phosphate + uracil. It catalyses the reaction xanthosine + phosphate = alpha-D-ribose 1-phosphate + xanthine. In terms of biological role, catalyzes the phosphorolysis of diverse nucleosides, yielding D-ribose 1-phosphate and the respective free bases. Can use uridine, adenosine, guanosine, cytidine, thymidine, inosine and xanthosine as substrates. Also catalyzes the reverse reactions. The sequence is that of Pyrimidine/purine nucleoside phosphorylase from Cupriavidus taiwanensis (strain DSM 17343 / BCRC 17206 / CCUG 44338 / CIP 107171 / LMG 19424 / R1) (Ralstonia taiwanensis (strain LMG 19424)).